The chain runs to 68 residues: Large ribosomal subunit protein bL35 (68 aa).

Composition is skewed to basic residues over residues Met-1–Lys-11 and Ser-19–Ala-29. The interval Met-1–Met-54 is disordered.

It belongs to the bacterial ribosomal protein bL35 family.

The polypeptide is Large ribosomal subunit protein bL35 (Myxococcus xanthus (strain DK1622)).